We begin with the raw amino-acid sequence, 291 residues long: MKTGRIVKSISGVYQVDVNGERFNTKPRGLFRKKKFSPVVGDIVEFEVQNINEGYIHQVFERKNELKRPPVSNIDTLVIVMSAVEPNFSTQLLDRFLVIAHSYQLNARVLVTKKDKTPIEKQFEINELLKIYENIGYETEFIGNDDDRKKIVEAWPAGLIVLSGQSGVGKSTFLNHYRPELNLETNDISKSLNRGKHTTRHVELFERQNGYIADTPGFSALDFDHIDKDEIKDYFLELNRYGETCKFRNCNHIKEPNCNVKHQLEIGNIAQFRYDHYLQLFNEISNRKVRY.

One can recognise a CP-type G domain in the interval lysine 63–leucine 221. GTP contacts are provided by residues threonine 112 to aspartate 115 and glycine 164 to threonine 172. The Zn(2+) site is built by cysteine 245, cysteine 250, histidine 252, and cysteine 258.

Belongs to the TRAFAC class YlqF/YawG GTPase family. RsgA subfamily. In terms of assembly, monomer. Associates with 30S ribosomal subunit, binds 16S rRNA. Requires Zn(2+) as cofactor.

It is found in the cytoplasm. One of several proteins that assist in the late maturation steps of the functional core of the 30S ribosomal subunit. Helps release RbfA from mature subunits. May play a role in the assembly of ribosomal proteins into the subunit. Circularly permuted GTPase that catalyzes slow GTP hydrolysis, GTPase activity is stimulated by the 30S ribosomal subunit. In Staphylococcus aureus (strain Mu50 / ATCC 700699), this protein is Small ribosomal subunit biogenesis GTPase RsgA.